A 459-amino-acid polypeptide reads, in one-letter code: Serine carboxypeptidase-like 27 (459 aa).

A signal peptide spans 1–20 (MDYSFLLIILLLTISTSCCA). Cystine bridges form between Cys91–Cys344, Cys252–Cys264, and Cys288–Cys312. Asn142 is a glycosylation site (N-linked (GlcNAc...) asparagine). Ser184 is a catalytic residue. Asn289 and Asn333 each carry an N-linked (GlcNAc...) asparagine glycan. Catalysis depends on residues Asp381 and His433.

It belongs to the peptidase S10 family. Ubiquitous.

Its subcellular location is the secreted. Its function is as follows. Probable carboxypeptidase. The sequence is that of Serine carboxypeptidase-like 27 (SCPL27) from Arabidopsis thaliana (Mouse-ear cress).